The following is a 156-amino-acid chain: Cell division protein SepF (156 aa).

Basic and acidic residues predominate over residues 20 to 36 (AQYGYEKEQTDMKKQQD). Residues 20–50 (AQYGYEKEQTDMKKQQDPPEQQDVTFPKAQP) are disordered.

This sequence belongs to the SepF family. In terms of assembly, homodimer. Interacts with FtsZ.

It is found in the cytoplasm. Functionally, cell division protein that is part of the divisome complex and is recruited early to the Z-ring. Probably stimulates Z-ring formation, perhaps through the cross-linking of FtsZ protofilaments. Its function overlaps with FtsA. This is Cell division protein SepF from Bacillus cereus (strain G9842).